The primary structure comprises 554 residues: MEDIVNRLYAFDWRSLSLGSVPAPTPAPAPQSSVVHHLIAWWDQSKDSMQQYSVASVAIAGFTALVVSVALYRALFSQRQRHDPLNQGCQPLRMYPHKDRIFGLDFVYQNVTTFRRHKYLETLKNRYQTLGTTYGVRVFNRRGILTSDPENIKTILSTRFKDYSLGNRVPIMGPLLGRGIFVSDGQDWSHSRALLRPNFVKEQVADLQMIETHLAQLLKLIPSDGRTVVELQDLFLRFTLDSATDFLFGHSLHTLSRGTAKDQQFGQAFALALDDIALQFRLGPWRALRRPNKDALAAYEICRGYVEGFVADAMAYRHGKASSTGDKNTSDRSYFLKELAQATDDRDRIRDELLNILIAGRDTTASLLGSLFYVLARHPEVWQKLRSEAATQLQGAAPNYEQLRNLQYTRHCINETLRLYPPVPNNTKMAVCDTILPRGGGPKGDAPVFVPKGCTMIYTVYAMHRRTDLFGPDAEEFRPERWATQRFSWEFLPFNGGPRICLGQQYALTEAMYVLVRFAQTFQTIEAQDPAPWTEQLTLTLASNNGVKVRLKGA.

A helical transmembrane segment spans residues 52–72 (YSVASVAIAGFTALVVSVALY). N-linked (GlcNAc...) asparagine glycans are attached at residues Asn110, Asn328, Asn414, and Asn425. Cys501 provides a ligand contact to heme.

The protein belongs to the cytochrome P450 family. Heme is required as a cofactor.

The protein resides in the membrane. Its pathway is secondary metabolite biosynthesis. Cytochrome P450 monooxygenase; part of the him gene cluster that mediates the biosynthesis of himeic acid A, a ubiquitin-activating enzyme (E1) inhibitor. First, himA, together with the trans-enoyl reductase himH, catalyzes the formation of apolyketide chain, which is then condensed with leucine by the NRPS activity of himA. Dieckmann cyclization and release from himA gives a tetramic acid intermediate as the product of himA PKS-NRPS. HimG then catalyzes alpha-oxidation of the tetramic acid ring, with a subsequent rearrangement to yield apyrone intermediate. Two terminal methyl groups of polyketide and amide side chains are oxidized to carboxylic acids by himC cytochrome P450 monooxygenase to form himeic acid A. Himeic acid A is further converted to himeic acid B and C during culture growth. No gene responsible for pyrone to pyridone conversion was found in the him gene cluster and himeic acid A is non-enzymatically converted to himeic acid C by the incorporation of an ammonium nitrogen atom in a pH5 buffer, and to himeic acid B at a conversion ratio of 50% during incubation in MeOH for 5 days. This Aspergillus japonicus protein is Cytochrome P450 monooxygenase himC.